The following is a 362-amino-acid chain: S-adenosylmethionine decarboxylase proenzyme (362 aa).

Catalysis depends on residues glutamate 11 and glutamate 14. Residue serine 71 is the Schiff-base intermediate with substrate; via pyruvic acid of the active site. The residue at position 71 (serine 71) is a Pyruvic acid (Ser); by autocatalysis. The Proton donor; for catalytic activity role is filled by cysteine 85. Residues serine 234 and histidine 247 each act as proton acceptor; for processing activity in the active site.

It belongs to the eukaryotic AdoMetDC family. Pyruvate is required as a cofactor. In terms of processing, is synthesized initially as an inactive proenzyme. Formation of the active enzyme involves a self-maturation process in which the active site pyruvoyl group is generated from an internal serine residue via an autocatalytic post-translational modification. Two non-identical subunits are generated from the proenzyme in this reaction, and the pyruvate is formed at the N-terminus of the alpha chain, which is derived from the carboxyl end of the proenzyme. The post-translation cleavage follows an unusual pathway, termed non-hydrolytic serinolysis, in which the side chain hydroxyl group of the serine supplies its oxygen atom to form the C-terminus of the beta chain, while the remainder of the serine residue undergoes an oxidative deamination to produce ammonia and the pyruvoyl group blocking the N-terminus of the alpha chain.

The enzyme catalyses S-adenosyl-L-methionine + H(+) = S-adenosyl 3-(methylsulfanyl)propylamine + CO2. It participates in amine and polyamine biosynthesis; S-adenosylmethioninamine biosynthesis; S-adenosylmethioninamine from S-adenosyl-L-methionine: step 1/1. The sequence is that of S-adenosylmethionine decarboxylase proenzyme (SAMDC) from Ipomoea batatas (Sweet potato).